The sequence spans 326 residues: MIVPTYGDVLDASNRIKEYVNKTPVLTSRMLNDRLGAQIYFKGENFQRVGAFKFRGAMNAVSKLSDEKRSKGVIAFSSGNHAQAIALSAKLLNVPATIVMPEDAPALKVAATAGYGAHIIRYNRYTEDREQIGRQLAAEHGFALIPPYDHPDVIAGQGTSAKELLEEVGQLDALFVPLGGGGLLSGSALAARSLSPGCKIFGVEPEAGNDGQQSFRSGSIVHINTPKTIADGAQTQHLGEYTFAIIRENVDDILTVSDQELVKCMHFLAERMKVVVEPTACLGFAGALLKKEELVGKKVGIILSGGNVDMKRYATLISGKEDGPTI.

An N6-(pyridoxal phosphate)lysine modification is found at K53. Residues N80, 179–183 (GGGGL), and S304 each bind pyridoxal 5'-phosphate.

The protein belongs to the serine/threonine dehydratase family. As to quaternary structure, monomer. The cofactor is pyridoxal 5'-phosphate. Requires Mn(2+) as cofactor. It depends on Mg(2+) as a cofactor. Ca(2+) is required as a cofactor.

The enzyme catalyses (3S)-3-hydroxy-L-aspartate = oxaloacetate + NH4(+). Is strongly inhibited by hydroxylamine and EDTA in vitro. In terms of biological role, catalyzes the deamination of L-threo-3-hydroxyaspartate to oxaloacetate and ammonia. Shows a high specificity towards L-threo-3-hydroxyaspartate as other 3-hydroxyaminoacids, i.e. D,L-erythro- and D-threo-3-hydroxyaspartate, D-threonine, L-threonine, D,L-allothreonine, D-serine, and L-serine, are not substrates for this enzyme. Exhibits no detectable serine racemase activity. Is responsible for the 3-hydroxyaspartate resistance of S.cerevisiae, and thus may be involved in the detoxification of naturally occurring 3-hydroxyaspartate. The chain is L-threo-3-hydroxyaspartate ammonia-lyase (SRY1) from Saccharomyces cerevisiae (strain ATCC 204508 / S288c) (Baker's yeast).